Consider the following 206-residue polypeptide: Probable N-acetyltransferase 14 (206 aa).

Residues leucine 55–leucine 206 enclose the N-acetyltransferase domain. A helical membrane pass occupies residues phenylalanine 57 to valine 77.

It belongs to the camello family.

The protein localises to the membrane. Probable acetyltransferase. In terms of biological role, may act as a transcription factor regulating the expression of coproporphyrinogen oxidase by binding to a promoter regulatory element. The sequence is that of Probable N-acetyltransferase 14 (NAT14) from Macaca fascicularis (Crab-eating macaque).